Consider the following 333-residue polypeptide: Glycerol-3-phosphate dehydrogenase [NAD(P)+] 2 (333 aa).

4 residues coordinate NADPH: serine 12, tryptophan 13, arginine 32, and lysine 106. Sn-glycerol 3-phosphate is bound by residues lysine 106 and glycine 134. Residue alanine 138 coordinates NADPH. Residues lysine 189, aspartate 242, serine 252, arginine 253, and asparagine 254 each coordinate sn-glycerol 3-phosphate. Lysine 189 (proton acceptor) is an active-site residue. Residue arginine 253 coordinates NADPH. NADPH is bound by residues valine 277 and glutamate 279.

Belongs to the NAD-dependent glycerol-3-phosphate dehydrogenase family.

It is found in the cytoplasm. The catalysed reaction is sn-glycerol 3-phosphate + NAD(+) = dihydroxyacetone phosphate + NADH + H(+). It carries out the reaction sn-glycerol 3-phosphate + NADP(+) = dihydroxyacetone phosphate + NADPH + H(+). The protein operates within membrane lipid metabolism; glycerophospholipid metabolism. Its function is as follows. Catalyzes the reduction of the glycolytic intermediate dihydroxyacetone phosphate (DHAP) to sn-glycerol 3-phosphate (G3P), the key precursor for phospholipid synthesis. The sequence is that of Glycerol-3-phosphate dehydrogenase [NAD(P)+] 2 from Sphingopyxis alaskensis (strain DSM 13593 / LMG 18877 / RB2256) (Sphingomonas alaskensis).